Here is a 195-residue protein sequence, read N- to C-terminus: Phenoloxidase subunit 1 (195 aa).

His10 contacts Cu cation. Asn77, Asn97, and Asn98 each carry an N-linked (GlcNAc...) asparagine glycan.

The protein belongs to the tyrosinase family. As to quaternary structure, heterodimer. Requires Cu(2+) as cofactor.

Its subcellular location is the secreted. It catalyses the reaction 2 L-dopa + O2 = 2 L-dopaquinone + 2 H2O. It carries out the reaction L-tyrosine + O2 = L-dopaquinone + H2O. This is a copper-containing oxidase that functions in the formation of pigments such as melanins and other polyphenolic compounds. Catalyzes the rate-limiting conversions of tyrosine to DOPA, DOPA to DOPA-quinone and possibly 5,6 dihydroxyindole to indole-5'6 quinone. This chain is Phenoloxidase subunit 1, found in Simulium damnosum (Black fly).